We begin with the raw amino-acid sequence, 349 residues long: Zinc-type alcohol dehydrogenase-like protein PB24D3.08c (349 aa).

The protein belongs to the zinc-containing alcohol dehydrogenase family. Quinone oxidoreductase subfamily.

It is found in the cytoplasm. The protein localises to the nucleus. This Schizosaccharomyces pombe (strain 972 / ATCC 24843) (Fission yeast) protein is Zinc-type alcohol dehydrogenase-like protein PB24D3.08c.